The chain runs to 191 residues: Putative manganese efflux pump MntP (191 aa).

A run of 6 helical transmembrane segments spans residues 3–23, 37–57, 65–85, 107–129, 144–164, and 169–189; these read PISI…AAIG, LRAG…GWLL, VEAF…IHMI, WKLA…GLAF, CTLT…SMVG, and IIGG…HLHG.

It belongs to the MntP (TC 9.B.29) family.

The protein resides in the cell inner membrane. Probably functions as a manganese efflux pump. The sequence is that of Putative manganese efflux pump MntP from Stenotrophomonas maltophilia (strain R551-3).